Consider the following 880-residue polypeptide: Alanine--tRNA ligase (880 aa).

Zn(2+) is bound by residues His563, His567, Cys673, and His677.

Belongs to the class-II aminoacyl-tRNA synthetase family. It depends on Zn(2+) as a cofactor.

It is found in the cytoplasm. It catalyses the reaction tRNA(Ala) + L-alanine + ATP = L-alanyl-tRNA(Ala) + AMP + diphosphate. Its function is as follows. Catalyzes the attachment of alanine to tRNA(Ala) in a two-step reaction: alanine is first activated by ATP to form Ala-AMP and then transferred to the acceptor end of tRNA(Ala). Also edits incorrectly charged Ser-tRNA(Ala) and Gly-tRNA(Ala) via its editing domain. This chain is Alanine--tRNA ligase, found in Caulobacter vibrioides (strain ATCC 19089 / CIP 103742 / CB 15) (Caulobacter crescentus).